A 71-amino-acid chain; its full sequence is High-potential iron-sulfur protein isozyme 2 (71 aa).

Residues Cys34, Cys37, Cys51, and Cys65 each contribute to the [4Fe-4S] cluster site.

Belongs to the high-potential iron-sulfur protein (HiPIP) family. As to quaternary structure, homodimer.

In terms of biological role, specific class of high-redox-potential 4Fe-4S ferredoxins. Functions in anaerobic electron transport in most purple and in some other photosynthetic bacteria and in at least one genus (Paracoccus) of halophilic, denitrifying bacteria. This is High-potential iron-sulfur protein isozyme 2 (hip2) from Ectothiorhodospira shaposhnikovii (Ectothiorhodospira vacuolata).